The chain runs to 184 residues: ADP-ribosylation factor-like protein 2 (184 aa).

Gly-2 carries N-myristoyl glycine lipidation. GTP is bound at residue 23–30; sequence GLDNAGKT. At Ser-45 the chain carries Phosphoserine. GTP-binding positions include 66-70 and Gly-68; that span reads DVGGQ. Lys-71 participates in a covalent cross-link: Glycyl lysine isopeptide (Lys-Gly) (interchain with G-Cter in ubiquitin). 125–128 serves as a coordination point for GTP; sequence NKQD.

This sequence belongs to the small GTPase superfamily. Arf family. In terms of assembly, interacts with ELMOD2. Interacts with ARL2BP; the GTP-bound form interacts with ARL2BP. The GDP-bound form interacts preferentially with TBCD. Interacts with UNC119. Found in a complex with ARL2, ARL2BP and SLC25A4. The GTP-bound form interacts with PDE6D. Found in a complex with ARL2, ARL2BP and SLC25A6. Found in a complex with at least ARL2, PPP2CB, PPP2R1A, PPP2R2A, PPP2R5E and TBCD. Not N-myristoylated. Expressed in liver and retina (at protein level).

It localises to the nucleus. Its subcellular location is the mitochondrion intermembrane space. It is found in the cytoplasm. The protein resides in the cytoskeleton. The protein localises to the microtubule organizing center. It localises to the centrosome. Its subcellular location is the mitochondrion. In terms of biological role, small GTP-binding protein which cycles between an inactive GDP-bound and an active GTP-bound form, and the rate of cycling is regulated by guanine nucleotide exchange factors (GEF) and GTPase-activating proteins (GAP). GTP-binding protein that does not act as an allosteric activator of the cholera toxin catalytic subunit. Regulates formation of new microtubules and centrosome integrity. Prevents the TBCD-induced microtubule destruction. Participates in association with TBCD, in the disassembly of the apical junction complexes. Antagonizes the effect of TBCD on epithelial cell detachment and tight and adherens junctions disassembly. Together with ARL2, plays a role in the nuclear translocation, retention and transcriptional activity of STAT3. Component of a regulated secretory pathway involved in Ca(2+)-dependent release of acetylcholine. Required for normal progress through the cell cycle. The chain is ADP-ribosylation factor-like protein 2 (ARL2) from Bos taurus (Bovine).